The following is a 37-amino-acid chain: Large ribosomal subunit protein bL36 (37 aa).

Zn(2+) is bound by residues C11, C14, C27, and H32.

The protein belongs to the bacterial ribosomal protein bL36 family. Part of the 50S ribosomal subunit. The cofactor is Zn(2+).

In terms of biological role, binds the 23S rRNA. The chain is Large ribosomal subunit protein bL36 (rpmJ) from Deinococcus radiodurans (strain ATCC 13939 / DSM 20539 / JCM 16871 / CCUG 27074 / LMG 4051 / NBRC 15346 / NCIMB 9279 / VKM B-1422 / R1).